Reading from the N-terminus, the 353-residue chain is S-adenosylmethionine:tRNA ribosyltransferase-isomerase (353 aa).

Belongs to the QueA family. Monomer.

Its subcellular location is the cytoplasm. It carries out the reaction 7-aminomethyl-7-carbaguanosine(34) in tRNA + S-adenosyl-L-methionine = epoxyqueuosine(34) in tRNA + adenine + L-methionine + 2 H(+). The protein operates within tRNA modification; tRNA-queuosine biosynthesis. In terms of biological role, transfers and isomerizes the ribose moiety from AdoMet to the 7-aminomethyl group of 7-deazaguanine (preQ1-tRNA) to give epoxyqueuosine (oQ-tRNA). The protein is S-adenosylmethionine:tRNA ribosyltransferase-isomerase of Cupriavidus metallidurans (strain ATCC 43123 / DSM 2839 / NBRC 102507 / CH34) (Ralstonia metallidurans).